Consider the following 219-residue polypeptide: Guanylate kinase (219 aa).

One can recognise a Guanylate kinase-like domain in the interval 15-194 (GLMFVLSSPS…AFAEVQSILK (180 aa)). 22–29 (SPSGAGKT) is an ATP binding site.

Belongs to the guanylate kinase family.

It is found in the cytoplasm. It carries out the reaction GMP + ATP = GDP + ADP. In terms of biological role, essential for recycling GMP and indirectly, cGMP. This Nitrobacter winogradskyi (strain ATCC 25391 / DSM 10237 / CIP 104748 / NCIMB 11846 / Nb-255) protein is Guanylate kinase.